Reading from the N-terminus, the 323-residue chain is o-succinylbenzoate synthase (323 aa).

Lysine 134 acts as the Proton donor in catalysis. Mg(2+)-binding residues include aspartate 162, glutamate 191, and aspartate 214. Catalysis depends on lysine 236, which acts as the Proton acceptor.

The protein belongs to the mandelate racemase/muconate lactonizing enzyme family. MenC type 1 subfamily. Requires a divalent metal cation as cofactor.

The enzyme catalyses (1R,6R)-6-hydroxy-2-succinyl-cyclohexa-2,4-diene-1-carboxylate = 2-succinylbenzoate + H2O. The protein operates within quinol/quinone metabolism; 1,4-dihydroxy-2-naphthoate biosynthesis; 1,4-dihydroxy-2-naphthoate from chorismate: step 4/7. It participates in quinol/quinone metabolism; menaquinone biosynthesis. Its function is as follows. Converts 2-succinyl-6-hydroxy-2,4-cyclohexadiene-1-carboxylate (SHCHC) to 2-succinylbenzoate (OSB). In Photorhabdus laumondii subsp. laumondii (strain DSM 15139 / CIP 105565 / TT01) (Photorhabdus luminescens subsp. laumondii), this protein is o-succinylbenzoate synthase.